The following is a 389-amino-acid chain: Flagellar P-ring protein (389 aa).

The first 33 residues, 1-33 (MRPLVAARRRAAACCALAACMLALAFAPAAARA), serve as a signal peptide directing secretion.

This sequence belongs to the FlgI family. The basal body constitutes a major portion of the flagellar organelle and consists of four rings (L,P,S, and M) mounted on a central rod.

It localises to the periplasm. The protein resides in the bacterial flagellum basal body. Assembles around the rod to form the L-ring and probably protects the motor/basal body from shearing forces during rotation. The chain is Flagellar P-ring protein from Burkholderia pseudomallei (strain K96243).